A 215-amino-acid polypeptide reads, in one-letter code: Protein NETWORKED 3B (215 aa).

In terms of domain architecture, NAB spans 5 to 90; sequence SKWWWIGANH…QKHDLLIKTS (86 aa). Residues 134–165 are a coiled coil; it reads DETMKEELEILREENRVYKEKKEVVTRLLANL.

It belongs to the NET family. As to quaternary structure, interacts with F-actin.

Functionally, plant-specific actin binding protein. May be part of a membrane-cytoskeletal adapter complex. This chain is Protein NETWORKED 3B, found in Arabidopsis thaliana (Mouse-ear cress).